A 509-amino-acid chain; its full sequence is Activin receptor type-1 (509 aa).

Residues 1-20 (MVDGVMILPVLVMIAFPFPS) form the signal peptide. Residues 21–123 (MEDEKPKVNP…FPGTQNFHLE (103 aa)) lie on the Extracellular side of the membrane. A glycan (N-linked (GlcNAc...) asparagine) is linked at Asn102. Residues 124–146 (VGLIILSVVFAVCLLACLLGVAL) traverse the membrane as a helical segment. The Cytoplasmic segment spans residues 147–509 (RKFKRRNQER…NSLDKLKTDC (363 aa)). In terms of domain architecture, GS spans 178 to 207 (STLADLLDHSCTSGSGSGLPFLVQRTVARQ). The 295-residue stretch at 208–502 (ITLLECVGKG…KTLTKIDNSL (295 aa)) folds into the Protein kinase domain. ATP is bound by residues 214 to 222 (VGKGRYGEV) and Lys235. Asp336 serves as the catalytic Proton acceptor. Ser501 carries the phosphoserine modification.

It belongs to the protein kinase superfamily. TKL Ser/Thr protein kinase family. TGFB receptor subfamily. In terms of assembly, interacts with FKBP1A. Interacts with FCHO1. Interacts with CLU. Interacts with type II receptors AMHR2 and ACVR2A. Interacts with BMP7. Interacts with BMP9. Interacts with BMP6 (when glycosylated); the interaction may induce HAMP expression. Interacts with TSC22D1/TSC-22. Mg(2+) is required as a cofactor. It depends on Mn(2+) as a cofactor.

It is found in the membrane. It carries out the reaction L-threonyl-[receptor-protein] + ATP = O-phospho-L-threonyl-[receptor-protein] + ADP + H(+). The catalysed reaction is L-seryl-[receptor-protein] + ATP = O-phospho-L-seryl-[receptor-protein] + ADP + H(+). In terms of biological role, bone morphogenetic protein (BMP) type I receptor that is involved in a wide variety of biological processes, including bone, heart, cartilage, nervous, and reproductive system development and regulation. As a type I receptor, forms heterotetrameric receptor complexes with the type II receptors AMHR2, ACVR2A ors ACVR2B. Upon binding of ligands such as BMP7 or BMP9 to the heteromeric complexes, type II receptors transphosphorylate ACVR1 intracellular domain. In turn, ACVR1 kinase domain is activated and subsequently phosphorylates SMAD1/5/8 proteins that transduce the signal. In addition to its role in mediating BMP pathway-specific signaling, suppresses TGFbeta/activin pathway signaling by interfering with the binding of activin to its type II receptor. Besides canonical SMAD signaling, can activate non-canonical signaling pathways. May promote the expression of HAMP, potentially via its interaction with BMP6. The sequence is that of Activin receptor type-1 (ACVR1) from Bos taurus (Bovine).